We begin with the raw amino-acid sequence, 645 residues long: DNA mismatch repair protein MutL (645 aa).

It belongs to the DNA mismatch repair MutL/HexB family.

In terms of biological role, this protein is involved in the repair of mismatches in DNA. It is required for dam-dependent methyl-directed DNA mismatch repair. May act as a 'molecular matchmaker', a protein that promotes the formation of a stable complex between two or more DNA-binding proteins in an ATP-dependent manner without itself being part of a final effector complex. The protein is DNA mismatch repair protein MutL of Pediococcus pentosaceus (strain ATCC 25745 / CCUG 21536 / LMG 10740 / 183-1w).